The sequence spans 345 residues: Phosphoribosylformylglycinamidine cyclo-ligase (345 aa).

Belongs to the AIR synthase family.

It is found in the cytoplasm. The enzyme catalyses 2-formamido-N(1)-(5-O-phospho-beta-D-ribosyl)acetamidine + ATP = 5-amino-1-(5-phospho-beta-D-ribosyl)imidazole + ADP + phosphate + H(+). The protein operates within purine metabolism; IMP biosynthesis via de novo pathway; 5-amino-1-(5-phospho-D-ribosyl)imidazole from N(2)-formyl-N(1)-(5-phospho-D-ribosyl)glycinamide: step 2/2. The protein is Phosphoribosylformylglycinamidine cyclo-ligase of Aeromonas salmonicida (strain A449).